The sequence spans 467 residues: ATP synthase subunit beta (467 aa).

150-157 (GGAGVGKT) is a binding site for ATP.

The protein belongs to the ATPase alpha/beta chains family. As to quaternary structure, F-type ATPases have 2 components, CF(1) - the catalytic core - and CF(0) - the membrane proton channel. CF(1) has five subunits: alpha(3), beta(3), gamma(1), delta(1), epsilon(1). CF(0) has three main subunits: a(1), b(2) and c(9-12). The alpha and beta chains form an alternating ring which encloses part of the gamma chain. CF(1) is attached to CF(0) by a central stalk formed by the gamma and epsilon chains, while a peripheral stalk is formed by the delta and b chains.

It is found in the cell inner membrane. The catalysed reaction is ATP + H2O + 4 H(+)(in) = ADP + phosphate + 5 H(+)(out). Produces ATP from ADP in the presence of a proton gradient across the membrane. The catalytic sites are hosted primarily by the beta subunits. The sequence is that of ATP synthase subunit beta from Vibrio parahaemolyticus serotype O3:K6 (strain RIMD 2210633).